A 459-amino-acid polypeptide reads, in one-letter code: Type IV methyl-directed restriction enzyme EcoKMcrB subunit (459 aa).

GTP is bound by residues 201–208 (GPPGVGKT), 300–303 (DKRG), and 333–336 (NTAD).

Functionally, recognizes N4- and C5-methylcytosine (and 5-hydroxy-methylcytosines) produced by a broad range of DNA methylases and appears to act against 5-methylcytosine preceded by a purine residue. Binds to DNA containing methylated cytosines; also binds to GTP. Isoform 33 kDa is less active than isoform 51 kDa and may play a role in regulating the activity of isoform 51 kDa by competing with it in DNA and protein binding abilities. The protein is Type IV methyl-directed restriction enzyme EcoKMcrB subunit (mcrB) of Escherichia coli (strain K12).